Here is a 188-residue protein sequence, read N- to C-terminus: UPF0398 protein BBR47_29830 (188 aa).

It belongs to the UPF0398 family.

This Brevibacillus brevis (strain 47 / JCM 6285 / NBRC 100599) protein is UPF0398 protein BBR47_29830.